The sequence spans 208 residues: Ribosomal RNA large subunit methyltransferase E (208 aa).

Residues Gly62, Trp64, Asp82, Asp98, and Asp123 each coordinate S-adenosyl-L-methionine. Lys163 serves as the catalytic Proton acceptor.

Belongs to the class I-like SAM-binding methyltransferase superfamily. RNA methyltransferase RlmE family.

It localises to the cytoplasm. It catalyses the reaction uridine(2552) in 23S rRNA + S-adenosyl-L-methionine = 2'-O-methyluridine(2552) in 23S rRNA + S-adenosyl-L-homocysteine + H(+). Its function is as follows. Specifically methylates the uridine in position 2552 of 23S rRNA at the 2'-O position of the ribose in the fully assembled 50S ribosomal subunit. This is Ribosomal RNA large subunit methyltransferase E from Actinobacillus pleuropneumoniae serotype 5b (strain L20).